The following is a 478-amino-acid chain: Putative L-amino-acid oxidase YobN (478 aa).

Residues serine 34, glutamate 53, arginine 61, and 80-81 (MR) each bind FAD. Arginine 81 and tyrosine 369 together coordinate substrate. Residues glutamate 451 and 460-463 (MQGA) contribute to the FAD site.

This sequence belongs to the flavin monoamine oxidase family. FIG1 subfamily. It depends on FAD as a cofactor.

The enzyme catalyses an L-alpha-amino acid + O2 + H2O = a 2-oxocarboxylate + H2O2 + NH4(+). The chain is Putative L-amino-acid oxidase YobN (yobN) from Bacillus subtilis (strain 168).